A 245-amino-acid polypeptide reads, in one-letter code: tRNA (guanine-N(1)-)-methyltransferase (245 aa).

S-adenosyl-L-methionine contacts are provided by residues Gly-108 and 127–132 (IGDYVL).

It belongs to the RNA methyltransferase TrmD family. In terms of assembly, homodimer.

The protein resides in the cytoplasm. It carries out the reaction guanosine(37) in tRNA + S-adenosyl-L-methionine = N(1)-methylguanosine(37) in tRNA + S-adenosyl-L-homocysteine + H(+). In terms of biological role, specifically methylates guanosine-37 in various tRNAs. In Lactobacillus delbrueckii subsp. bulgaricus (strain ATCC 11842 / DSM 20081 / BCRC 10696 / JCM 1002 / NBRC 13953 / NCIMB 11778 / NCTC 12712 / WDCM 00102 / Lb 14), this protein is tRNA (guanine-N(1)-)-methyltransferase.